The primary structure comprises 360 residues: MIEDTMTLLSLLGRIMRYFLLRPETLFLLCISLALWSYFFHTDEVKTIVKSSRDAVKMVKGKVAEIMQNDRLGGLDVLEAEFSKTWEFKSHNVAVYSIQGRRDHMEDRFEVLMDLANKTHPSIFGIFDGHGGETAAEYVKSRLPEALKQHLQDYEKDKENSVLSYQTILEQQILSIDREMLEKLTVSYDEAGTTCLIALLSDKDLTVANVGDSRGVLCDKDGNAIPLSHDHKPYQLKERKRIKRAGGFISFNGSWRVQGILAMSRSLGDYPLKNLNVVIPDPDILTFDLDKLQPEFMILASDGLWDAFSNEEAVRFIKDRLDEPHFGAKSIVLQSFYRGCPDNITVMVVKFRNSSKTEEQ.

The Extracellular portion of the chain corresponds to 1–25 (MIEDTMTLLSLLGRIMRYFLLRPET). A helical membrane pass occupies residues 26–42 (LFLLCISLALWSYFFHT). Residues 43-360 (DEVKTIVKSS…FRNSSKTEEQ (318 aa)) lie on the Cytoplasmic side of the membrane. In terms of domain architecture, PPM-type phosphatase spans 92–351 (NVAVYSIQGR…DNITVMVVKF (260 aa)). Mn(2+) is bound by residues D128, G129, D302, and D342.

This sequence belongs to the PP2C family. In terms of assembly, interacts with MAP3K7/TAK1 and MAP3K5. Mg(2+) serves as cofactor. The cofactor is Mn(2+).

It localises to the membrane. It carries out the reaction O-phospho-L-seryl-[protein] + H2O = L-seryl-[protein] + phosphate. The catalysed reaction is O-phospho-L-threonyl-[protein] + H2O = L-threonyl-[protein] + phosphate. In terms of biological role, acts as a suppressor of the SAPK signaling pathways by associating with and dephosphorylating MAP3K7/TAK1 and MAP3K5, and by attenuating the association between MAP3K7/TAK1 and MAP2K4 or MAP2K6. This Bos taurus (Bovine) protein is Protein phosphatase 1L (PPM1L).